We begin with the raw amino-acid sequence, 312 residues long: HPr kinase/phosphorylase (312 aa).

Catalysis depends on residues His139 and Lys160. Gly154–Ser161 serves as a coordination point for ATP. Ser161 is a binding site for Mg(2+). The Proton acceptor; for phosphorylation activity. Proton donor; for dephosphorylation activity role is filled by Asp178. The important for the catalytic mechanism of both phosphorylation and dephosphorylation stretch occupies residues Met201–Asn210. A Mg(2+)-binding site is contributed by Glu202. Arg245 is an active-site residue. The important for the catalytic mechanism of dephosphorylation stretch occupies residues Pro266–Arg271.

The protein belongs to the HPrK/P family. As to quaternary structure, homohexamer, arranged as bilayered trimers. Mg(2+) is required as a cofactor.

It catalyses the reaction [HPr protein]-L-serine + ATP = [HPr protein]-O-phospho-L-serine + ADP + H(+). It carries out the reaction [HPr protein]-O-phospho-L-serine + phosphate + H(+) = [HPr protein]-L-serine + diphosphate. Its activity is regulated as follows. Contrary to HPrK/P of B.subtilis and other bacteria, that of M.pneumoniae is active as a kinase at very low ATP concentrations in the absence of fructose 1,6-bisphosphate (FBP). Kinase activity is slightly activated by FBP, and inhibited by inorganic phosphate (Pi), but FBP prevents kinase inhibition by Pi. Dephosphorylation of P-Ser-HPr by M.pneumoniae HPrK/P is strictly dependent on the presence of Pi, and is inhibited by FBP. This unique mode of control of HPrK/P activity is proposed to reflect the parasitic lifestyle of M.pneumoniae, that is strictly adapted to its ecological niche on nutrient-rich human mucous membranes. In terms of biological role, is a metabolite-sensitive enzyme that catalyzes the ATP-as well as probably the pyrophosphate-dependent phosphorylation of Ser-47 in HPr, a phosphocarrier protein of the phosphoenolpyruvate-dependent sugar phosphotransferase system (PTS). HprK/P also catalyzes the pyrophosphate-producing, inorganic phosphate-dependent dephosphorylation (phosphorolysis) of seryl-phosphorylated HPr (P-Ser-HPr). The regulatory role of HPrK/P in the physiology of M.pneumoniae is not known yet. The protein is HPr kinase/phosphorylase (hprK) of Mycoplasma pneumoniae (strain ATCC 29342 / M129 / Subtype 1) (Mycoplasmoides pneumoniae).